The chain runs to 607 residues: Polyphenol oxidase, chloroplastic (607 aa).

The N-terminal 103 residues, 1–103 (MASLPWSLTT…LGATKPLAFG (103 aa)), are a transit peptide targeting the chloroplast. The disordered stretch occupies residues 39 to 73 (RNRSRRFAPSKVSCNSANGDPNSDSTSDVRETSSG). The span at 50-64 (VSCNSANGDPNSDST) shows a compositional bias: polar residues. Disulfide bonds link cysteine 114–cysteine 129 and cysteine 128–cysteine 191. 6 residues coordinate Cu cation: histidine 190, histidine 211, histidine 220, histidine 342, histidine 346, and histidine 375. Residues 194 to 211 (CQGAYDQVGYTDLELQVH) constitute a cross-link (2'-(S-cysteinyl)-histidine (Cys-His)).

It belongs to the tyrosinase family. Cu(2+) is required as a cofactor.

Its subcellular location is the plastid. The protein resides in the chloroplast thylakoid lumen. It catalyses the reaction 2 catechol + O2 = 2 1,2-benzoquinone + 2 H2O. Functionally, catalyzes the oxidation of mono- and o-diphenols to o-diquinones. The protein is Polyphenol oxidase, chloroplastic of Vitis vinifera (Grape).